The sequence spans 521 residues: Probable inorganic phosphate transporter 1-3 (521 aa).

At 1–24 (MADQQLGVLKALDVAKTQLYHFTA) the chain is on the cytoplasmic side. Residues 25–45 (IVIAGMGFFTDAYDLFCVSLV) traverse the membrane as a helical segment. Residues 46–70 (TKLLGRLYYFNPTSAKPGSLPPHVA) lie on the Extracellular side of the membrane. Residues 71 to 91 (AAVNGVALCGTLAGQLFFGWL) form a helical membrane-spanning segment. Residues 92-99 (GDKLGRKK) are Cytoplasmic-facing. A helical membrane pass occupies residues 100–120 (VYGITLIMMILCSVASGLSLG). Residues 121–131 (NSAKGVMTTLC) are Extracellular-facing. Residues 132–152 (FFRFWLGFGIGGDYPLSATIM) form a helical membrane-spanning segment. Topologically, residues 153–161 (SEYANKKTR) are cytoplasmic. Residues 162–182 (GAFIAAVFAMQGVGILAGGFV) form a helical membrane-spanning segment. At 183-211 (ALAVSSIFDKKFPSPTYEQDRFLSTPPQA) the chain is on the extracellular side. Residues 212–232 (DYIWRIIVMFGALPAALTYYW) traverse the membrane as a helical segment. The Cytoplasmic portion of the chain corresponds to 233–292 (RMKMPETARYTALVAKNIKQATADMSKVLQTDLELEERVEDDVKDPKKNYGLFSKEFLRR). The chain crosses the membrane as a helical span at residues 293–313 (HGLHLLGTTSTWFLLDIAFYS). The Extracellular portion of the chain corresponds to 314–348 (QNLFQKDIFSAIGWIPKAATMNAIHEVFKIARAQT). Residues 349–369 (LIALCSTVPGYWFTVAFIDII) form a helical membrane-spanning segment. Topologically, residues 370-371 (GR) are cytoplasmic. A helical membrane pass occupies residues 372 to 392 (FAIQLMGFFMMTVFMFAIAFP). At 393 to 402 (YNHWILPDNR) the chain is on the extracellular side. Residues 403–423 (IGFVVMYSLTFFFANFGPNAT) form a helical membrane-spanning segment. Residues 424-441 (TFIVPAEIFPARLRSTCH) are Cytoplasmic-facing. The helical transmembrane segment at 442–462 (GISAATGKAGAIVGAFGFLYA) threads the bilayer. Topologically, residues 463 to 484 (AQPQDKTKTDAGYPPGIGVKNS) are extracellular. Residues 485 to 505 (LIMLGVINFVGMLFTFLVPEP) form a helical membrane-spanning segment. The Cytoplasmic portion of the chain corresponds to 506–521 (KGKSLEELSGEAEVDK).

This sequence belongs to the major facilitator superfamily. Phosphate:H(+) symporter (TC 2.A.1.9) family. Mainly expressed in roots, especially in the stele of the primary root, the pericycle and trichoblasts of secondary roots. To a lower extent, present in hydathodes and vascular tissues of young leaves.

The protein localises to the membrane. Its function is as follows. High-affinity transporter for external inorganic phosphate. The polypeptide is Probable inorganic phosphate transporter 1-3 (PHT1-3) (Arabidopsis thaliana (Mouse-ear cress)).